We begin with the raw amino-acid sequence, 290 residues long: Lipoyl synthase (290 aa).

The [4Fe-4S] cluster site is built by Cys32, Cys37, Cys43, Cys58, Cys62, Cys65, and Ser272. The region spanning 44-261 (WGEGTATFMI…KEVAVSLGFK (218 aa)) is the Radical SAM core domain.

This sequence belongs to the radical SAM superfamily. Lipoyl synthase family. It depends on [4Fe-4S] cluster as a cofactor.

The protein localises to the cytoplasm. The catalysed reaction is [[Fe-S] cluster scaffold protein carrying a second [4Fe-4S](2+) cluster] + N(6)-octanoyl-L-lysyl-[protein] + 2 oxidized [2Fe-2S]-[ferredoxin] + 2 S-adenosyl-L-methionine + 4 H(+) = [[Fe-S] cluster scaffold protein] + N(6)-[(R)-dihydrolipoyl]-L-lysyl-[protein] + 4 Fe(3+) + 2 hydrogen sulfide + 2 5'-deoxyadenosine + 2 L-methionine + 2 reduced [2Fe-2S]-[ferredoxin]. It functions in the pathway protein modification; protein lipoylation via endogenous pathway; protein N(6)-(lipoyl)lysine from octanoyl-[acyl-carrier-protein]: step 2/2. Functionally, catalyzes the radical-mediated insertion of two sulfur atoms into the C-6 and C-8 positions of the octanoyl moiety bound to the lipoyl domains of lipoate-dependent enzymes, thereby converting the octanoylated domains into lipoylated derivatives. The chain is Lipoyl synthase from Pyrobaculum aerophilum (strain ATCC 51768 / DSM 7523 / JCM 9630 / CIP 104966 / NBRC 100827 / IM2).